A 368-amino-acid chain; its full sequence is DNA replication and repair protein RecF (368 aa).

30 to 37 (GDNGAGKT) is an ATP binding site.

This sequence belongs to the RecF family.

The protein localises to the cytoplasm. The RecF protein is involved in DNA metabolism; it is required for DNA replication and normal SOS inducibility. RecF binds preferentially to single-stranded, linear DNA. It also seems to bind ATP. In Xanthomonas campestris pv. campestris (strain 8004), this protein is DNA replication and repair protein RecF.